The sequence spans 382 residues: V-type proton ATPase subunit C 1 (382 aa).

T2 is modified (N-acetylthreonine).

The protein belongs to the V-ATPase C subunit family. V-ATPase is a heteromultimeric enzyme made up of two complexes: the ATP-hydrolytic V1 complex and the proton translocation V0 complex. The V1 complex consists of three catalytic AB heterodimers that form a heterohexamer, three peripheral stalks each consisting of EG heterodimers, one central rotor including subunits D and F, and the regulatory subunits C and H. The proton translocation complex V0 consists of the proton transport subunit a, a ring of proteolipid subunits c9c'', rotary subunit d, subunits e and f, and the accessory subunits ATP6AP1/Ac45 and ATP6AP2/PRR. In terms of tissue distribution, expressed in brain (at protein level).

The protein resides in the cytoplasmic vesicle. It localises to the secretory vesicle. It is found in the synaptic vesicle membrane. The protein localises to the clathrin-coated vesicle membrane. Subunit of the V1 complex of vacuolar(H+)-ATPase (V-ATPase), a multisubunit enzyme composed of a peripheral complex (V1) that hydrolyzes ATP and a membrane integral complex (V0) that translocates protons. V-ATPase is responsible for acidifying and maintaining the pH of intracellular compartments and in some cell types, is targeted to the plasma membrane, where it is responsible for acidifying the extracellular environment. Subunit C is necessary for the assembly of the catalytic sector of the enzyme and is likely to have a specific function in its catalytic activity. The sequence is that of V-type proton ATPase subunit C 1 (ATP6V1C1) from Bos taurus (Bovine).